Here is a 313-residue protein sequence, read N- to C-terminus: Inner membrane ABC transporter permease protein YdcU (313 aa).

Over 1 to 25 (MAMNVLQSPSRPGLGKVSGFFWHNP) the chain is Cytoplasmic. The chain crosses the membrane as a helical span at residues 26-46 (GLGLFLLLLGPLMWFGIVYFG). Residues 47 to 92 (SLLTLLWQGFYTFDDFTMSVTPELTLANIRALFNPANYDIILRTLT) lie on the Periplasmic side of the membrane. The 216-residue stretch at 87-302 (ILRTLTMAVA…PIILIALYLA (216 aa)) folds into the ABC transmembrane type-1 domain. Residues 93–113 (MAVAVTIASAILAFPMAWYMA) form a helical membrane-spanning segment. The Cytoplasmic portion of the chain corresponds to 114 to 122 (RYTSGKMKA). The chain crosses the membrane as a helical span at residues 123–143 (FFYIAVMLPMWASYIVKAYAW). The Periplasmic portion of the chain corresponds to 144 to 154 (TLLLAKDGVAQ). The chain crosses the membrane as a helical span at residues 155–175 (WFLQHLGLEPLLTAFLTLPAV). The Cytoplasmic segment spans residues 176-187 (GGNTLSTSGLGR). The helical transmembrane segment at 188–208 (FLVFLYIWLPFMILPVQAALE) threads the bilayer. Topologically, residues 209-230 (RLPPSLLQASADLGARPRQTFR) are periplasmic. Residues 231–251 (YVVLPLAIPGIAAGSIFTFSL) traverse the membrane as a helical segment. Residue threonine 252 is a topological domain, cytoplasmic. A helical transmembrane segment spans residues 253–273 (LGDFIVPQLVGPPGYFIGNMV). Over 274–283 (YSQQGAIGNM) the chain is Periplasmic. The chain crosses the membrane as a helical span at residues 284-304 (PMAAAFTLVPIILIALYLAFV). The Cytoplasmic segment spans residues 305-313 (KRLGAFDAL).

It belongs to the binding-protein-dependent transport system permease family. CysTW subfamily.

It is found in the cell inner membrane. Probably part of the ABC transporter complex YdcSTUV. Probably responsible for the translocation of the substrate across the membrane. This is Inner membrane ABC transporter permease protein YdcU (ydcU) from Escherichia coli (strain K12).